A 255-amino-acid chain; its full sequence is Uracil-DNA glycosylase (255 aa).

Aspartate 90 functions as the Proton acceptor in the catalytic mechanism.

This sequence belongs to the uracil-DNA glycosylase (UDG) superfamily. UNG family.

It is found in the host nucleus. The enzyme catalyses Hydrolyzes single-stranded DNA or mismatched double-stranded DNA and polynucleotides, releasing free uracil.. Its function is as follows. Excises uracil residues from the DNA which can arise as a result of misincorporation of dUMP residues by DNA polymerase or deamination of cytosines. Therefore may reduce deleterious uracil incorporation into the viral genome, particularly in terminally differentiated cells which lack DNA repair enzymes. The protein is Uracil-DNA glycosylase of Equine herpesvirus 2 (strain 86/87) (EHV-2).